Here is a 76-residue protein sequence, read N- to C-terminus: Kappa-actitoxin-Avd4o (76 aa).

Positions 1–19 (MNKALFLSLVVLCAAVVFA) are cleaved as a signal peptide. A propeptide spanning residues 20 to 33 (AEDLQKAKHAPFKL) is cleaved from the precursor. Intrachain disulfides connect Cys37-Cys72, Cys39-Cys65, and Cys55-Cys73.

It belongs to the sea anemone type 3 (BDS) potassium channel toxin family. Experimental results show no expression in the ectodermal tissue from the distal and proximal tentacles, body wall, and oral disk. Since paralogs are expressed in this tissue, an expression of this toxin in this tissue is probable. The negative results could be explained by the very low abundance of EST sequences.

Its subcellular location is the secreted. The protein resides in the nematocyst. Its function is as follows. Blocks Kv3 voltage-gated potassium channels. Reduces blood pressure. This Anemonia viridis (Snakelocks anemone) protein is Kappa-actitoxin-Avd4o.